We begin with the raw amino-acid sequence, 104 residues long: L-rhamnose mutarotase (104 aa).

Position 18 (Tyr-18) interacts with substrate. The active-site Proton donor is the His-22. Substrate is bound by residues Tyr-41 and 76-77; that span reads WW.

The protein belongs to the rhamnose mutarotase family. As to quaternary structure, homodimer.

It localises to the cytoplasm. The catalysed reaction is alpha-L-rhamnose = beta-L-rhamnose. The protein operates within carbohydrate metabolism; L-rhamnose metabolism. In terms of biological role, involved in the anomeric conversion of L-rhamnose. The protein is L-rhamnose mutarotase of Jannaschia sp. (strain CCS1).